Reading from the N-terminus, the 217-residue chain is Probable rhamnogalacturonan acetylesterase YesY (217 aa).

The Nucleophile role is filled by S11. Catalysis depends on residues E178 and H185.

The protein belongs to the 'GDSL' lipolytic enzyme family.

In terms of biological role, may play a role in the degradation of rhamnogalacturonan derived from plant cell walls. Probably has broad substrate specificity and may degrade several types of acetylated substrates. The chain is Probable rhamnogalacturonan acetylesterase YesY (yesY) from Bacillus subtilis (strain 168).